The primary structure comprises 125 residues: UPF0102 protein PA4424 (125 aa).

Belongs to the UPF0102 family.

The chain is UPF0102 protein PA4424 from Pseudomonas aeruginosa (strain ATCC 15692 / DSM 22644 / CIP 104116 / JCM 14847 / LMG 12228 / 1C / PRS 101 / PAO1).